Here is a 454-residue protein sequence, read N- to C-terminus: Glutamate--tRNA ligase (454 aa).

The short motif at 7–17 (PSPTGCLHIGG) is the 'HIGH' region element. Zn(2+) is bound by residues Cys-96, Cys-98, Cys-123, and Asp-125. A 'KMSKS' region motif is present at residues 230–234 (RLSKR). Lys-233 serves as a coordination point for ATP.

The protein belongs to the class-I aminoacyl-tRNA synthetase family. Glutamate--tRNA ligase type 1 subfamily. In terms of assembly, monomer. Requires Zn(2+) as cofactor.

The protein localises to the cytoplasm. The catalysed reaction is tRNA(Glu) + L-glutamate + ATP = L-glutamyl-tRNA(Glu) + AMP + diphosphate. Its function is as follows. Catalyzes the attachment of glutamate to tRNA(Glu) in a two-step reaction: glutamate is first activated by ATP to form Glu-AMP and then transferred to the acceptor end of tRNA(Glu). The polypeptide is Glutamate--tRNA ligase (Ruthia magnifica subsp. Calyptogena magnifica).